The sequence spans 84 residues: Small ribosomal subunit protein eS27 (84 aa).

A compositionally biased stretch (basic and acidic residues) spans 1–16 (MPLAKDLLHPSPEEEK). The interval 1–23 (MPLAKDLLHPSPEEEKRKHKKKR) is disordered. Position 11 is a phosphoserine (serine 11). A C4-type zinc finger spans residues 38 to 60 (PGCYKITTVFSHAQTVVLCVGCS).

It belongs to the eukaryotic ribosomal protein eS27 family. Component of the small ribosomal subunit. Part of the small subunit (SSU) processome, composed of more than 70 proteins and the RNA chaperone small nucleolar RNA (snoRNA) U3. The cofactor is Zn(2+).

The protein localises to the cytoplasm. It is found in the nucleus. Its subcellular location is the nucleolus. In terms of biological role, component of the small ribosomal subunit. The ribosome is a large ribonucleoprotein complex responsible for the synthesis of proteins in the cell. Required for proper rRNA processing and maturation of 18S rRNAs. Part of the small subunit (SSU) processome, first precursor of the small eukaryotic ribosomal subunit. During the assembly of the SSU processome in the nucleolus, many ribosome biogenesis factors, an RNA chaperone and ribosomal proteins associate with the nascent pre-rRNA and work in concert to generate RNA folding, modifications, rearrangements and cleavage as well as targeted degradation of pre-ribosomal RNA by the RNA exosome. The sequence is that of Small ribosomal subunit protein eS27 from Mus musculus (Mouse).